Consider the following 147-residue polypeptide: Myosin-2 essential light chain (147 aa).

EF-hand domains are found at residues 7-42 (DQLA…LGQN), 80-115 (DTAD…LGEK), and 115-147 (KLTD…VMSG). Phosphoserine is present on Ser-30. Ca(2+) contacts are provided by Asp-93, Asp-95, Ser-97, Tyr-99, and Glu-104.

In terms of assembly, myosin is a hexamer of 2 heavy chains and 4 light chains.

This Drosophila melanogaster (Fruit fly) protein is Myosin-2 essential light chain (Mlc-c).